The following is a 335-amino-acid chain: Foldase protein PrsA (335 aa).

Positions 1–22 (MRSAKKLLSVLCLGVFILTFTA) are cleaved as a signal peptide. Cysteine 23 is lipidated: N-palmitoyl cysteine. Cysteine 23 is lipidated: S-diacylglycerol cysteine. Residues 194 to 285 (PNTMNVSHIL…FGYHIIKINS (92 aa)) enclose the PpiC domain.

The protein belongs to the PrsA family.

It localises to the cell membrane. It carries out the reaction [protein]-peptidylproline (omega=180) = [protein]-peptidylproline (omega=0). In terms of biological role, plays a major role in protein secretion by helping the post-translocational extracellular folding of several secreted proteins. In Clostridium botulinum (strain Loch Maree / Type A3), this protein is Foldase protein PrsA.